Reading from the N-terminus, the 115-residue chain is Promotilin (115 aa).

The first 25 residues, 1-25 (MLSRKATAVLLAVHAAAMLASQTEA), serve as a signal peptide directing secretion. The interval 43-72 (RYKGQKKSLSVQQRSEEVGPVDPTEPWEEK) is disordered.

The protein belongs to the motilin family.

It is found in the secreted. In terms of biological role, plays an important role in the regulation of interdigestive gastrointestinal motility and indirectly causes rhythmic contraction of duodenal and colonic smooth muscle. The chain is Promotilin (MLN) from Bos taurus (Bovine).